Consider the following 521-residue polypeptide: Probable feruloyl esterase B-2 (521 aa).

Positions 1-19 (MKVSLWLTLLGVNLSLALA) are cleaved as a signal peptide. N-linked (GlcNAc...) asparagine glycosylation is found at asparagine 13, asparagine 53, asparagine 85, asparagine 98, and asparagine 138. 2 disulfide bridges follow: cysteine 28–cysteine 75 and cysteine 63–cysteine 114. 4 disulfides stabilise this stretch: cysteine 187/cysteine 440, cysteine 257/cysteine 274, cysteine 283/cysteine 291, and cysteine 506/cysteine 520. Serine 188 functions as the Acyl-ester intermediate in the catalytic mechanism. N-linked (GlcNAc...) asparagine glycosylation is present at asparagine 235. Ca(2+) contacts are provided by aspartate 258, aspartate 261, valine 263, aspartate 265, and isoleucine 267. Aspartate 399 functions as the Charge relay system in the catalytic mechanism. N-linked (GlcNAc...) asparagine glycosylation is present at asparagine 419. Histidine 439 serves as the catalytic Charge relay system.

This sequence belongs to the tannase family.

It localises to the secreted. It catalyses the reaction feruloyl-polysaccharide + H2O = ferulate + polysaccharide.. Functionally, involved in degradation of plant cell walls. Hydrolyzes the feruloyl-arabinose ester bond in arabinoxylans as well as the feruloyl-galactose and feruloyl-arabinose ester bonds in pectin. This is Probable feruloyl esterase B-2 (faeB-2) from Aspergillus flavus (strain ATCC 200026 / FGSC A1120 / IAM 13836 / NRRL 3357 / JCM 12722 / SRRC 167).